The following is a 186-amino-acid chain: ATP synthase subunit delta (186 aa).

This sequence belongs to the ATPase delta chain family. As to quaternary structure, F-type ATPases have 2 components, F(1) - the catalytic core - and F(0) - the membrane proton channel. F(1) has five subunits: alpha(3), beta(3), gamma(1), delta(1), epsilon(1). CF(0) has four main subunits: a(1), b(1), b'(1) and c(10-14). The alpha and beta chains form an alternating ring which encloses part of the gamma chain. F(1) is attached to F(0) by a central stalk formed by the gamma and epsilon chains, while a peripheral stalk is formed by the delta, b and b' chains.

The protein resides in the cell inner membrane. Functionally, f(1)F(0) ATP synthase produces ATP from ADP in the presence of a proton or sodium gradient. F-type ATPases consist of two structural domains, F(1) containing the extramembraneous catalytic core and F(0) containing the membrane proton channel, linked together by a central stalk and a peripheral stalk. During catalysis, ATP synthesis in the catalytic domain of F(1) is coupled via a rotary mechanism of the central stalk subunits to proton translocation. Its function is as follows. This protein is part of the stalk that links CF(0) to CF(1). It either transmits conformational changes from CF(0) to CF(1) or is implicated in proton conduction. The polypeptide is ATP synthase subunit delta (Rhodopseudomonas palustris (strain BisB5)).